Reading from the N-terminus, the 916-residue chain is Oxysterol-binding protein 2 (916 aa).

3 disordered regions span residues 1–20 (MGKA…SRGL), 34–121 (TAAP…PFTK), and 139–163 (PESG…TPLG). Over residues 49–58 (EPKPQPQPVP) the composition is skewed to pro residues. Residues 79-92 (RSEPVSETTSEPEP) show a composition bias toward low complexity. Residues 99-113 (ELLQGSRPGSESSSG) are compositionally biased toward polar residues. Positions 144 to 155 (LPALKPLPLLRP) are enriched in low complexity. One can recognise a PH domain in the interval 182-274 (LDSFEGWLLK…WITALELAKA (93 aa)). Disordered stretches follow at residues 282–301 (THSD…DKSE) and 417–448 (FHSA…EEDE). At Ser287 the chain carries Phosphoserine. Ser763 carries the phosphoserine modification. Residues 813 to 842 (EGVAPTDSRLRPDQRLMEKGRWDEANTEKQ) form a disordered region.

The protein belongs to the OSBP family. As to quaternary structure, interacts with CCDC159. As to expression, expressed mainly in retina, testis, and fetal liver.

Its subcellular location is the membrane. The protein resides in the cytoplasmic vesicle. It is found in the secretory vesicle. The protein localises to the acrosome. Its function is as follows. Binds 7-ketocholesterol. Acts during spermatid development where its function is required prior to the removal of cytoplasm from the sperm head. The polypeptide is Oxysterol-binding protein 2 (OSBP2) (Homo sapiens (Human)).